The following is a 497-amino-acid chain: Cytochrome P450 26A1 (497 aa).

Position 442 (Cys-442) interacts with heme.

Belongs to the cytochrome P450 family. Heme is required as a cofactor. Expressed in most fetal and adult tissues with highest levels in adult liver, heart, pituitary gland, adrenal gland, placenta and regions of the brain. Expressed at high levels in lung, pancreas, skin and uterus (at protein level). Lower expression level is detected in spleen, kidney, intestine and adipose tissue (at protein level).

Its subcellular location is the endoplasmic reticulum membrane. The protein resides in the microsome membrane. The catalysed reaction is all-trans-retinoate + reduced [NADPH--hemoprotein reductase] + O2 = all-trans-(4S)-hydroxyretinoate + oxidized [NADPH--hemoprotein reductase] + H2O + H(+). It carries out the reaction all-trans-(4S)-hydroxyretinoate + reduced [NADPH--hemoprotein reductase] + O2 = all-trans-(4S,16)-dihydroxyretinoate + oxidized [NADPH--hemoprotein reductase] + H2O + H(+). It catalyses the reaction all-trans-retinoate + reduced [NADPH--hemoprotein reductase] + O2 = all-trans-18-hydroxyretinoate + oxidized [NADPH--hemoprotein reductase] + H2O + H(+). In terms of biological role, a cytochrome P450 monooxygenase involved in the metabolism of retinoates (RAs), the active metabolites of vitamin A, and critical signaling molecules in animals. RAs exist as at least four different isomers: all-trans-RA (atRA), 9-cis-RA, 13-cis-RA, and 9,13-dicis-RA, where atRA is considered to be the biologically active isomer, although 9-cis-RA and 13-cis-RA also have activity. Catalyzes the hydroxylation of atRA primarily at C-4 and C-18, thereby contributing to the regulation of atRA homeostasis and signaling. Hydroxylation of atRA limits its biological activity and initiates a degradative process leading to its eventual elimination. Involved in the convertion of atRA to all-trans-4-oxo-RA. Able to metabolize other RAs such as 9-cis, 13-cis and 9,13-di-cis RA. Can oxidize all-trans-13,14-dihydroretinoate (DRA) to metabolites which could include all-trans-4-oxo-DRA, all-trans-4-hydroxy-DRA, all-trans-5,8-epoxy-DRA, and all-trans-18-hydroxy-DRA. May play a role in the oxidative metabolism of xenobiotics such as tazarotenic acid. This is Cytochrome P450 26A1 from Homo sapiens (Human).